Reading from the N-terminus, the 104-residue chain is Small ribosomal subunit protein uS10 (104 aa).

The protein belongs to the universal ribosomal protein uS10 family. In terms of assembly, part of the 30S ribosomal subunit.

In terms of biological role, involved in the binding of tRNA to the ribosomes. The polypeptide is Small ribosomal subunit protein uS10 (Ralstonia nicotianae (strain ATCC BAA-1114 / GMI1000) (Ralstonia solanacearum)).